Here is a 207-residue protein sequence, read N- to C-terminus: Putative tributyltin chloride resistance protein (207 aa).

The segment at 37–122 (NLPIELALMP…YHAIAALNLG (86 aa)) is slt-type domain. Residue Glu-49 is part of the active site.

It belongs to the transglycosylase Slt family.

The polypeptide is Putative tributyltin chloride resistance protein (tbtA) (Alteromonas sp. (strain M-1)).